The sequence spans 35 residues: U1-theraphotoxin-Hs1f (35 aa).

Disulfide bonds link C3-C16, C7-C27, and C21-C32.

This sequence belongs to the neurotoxin 12 (Hwtx-2) family. 02 (Hwtx-2) subfamily. As to expression, expressed by the venom gland.

The protein localises to the secreted. Functionally, blocks neuromuscular transmission. Acts cooperatively to potentiate the activity of huwentoxin-I. Paralyzes locusts and kills mice following intracerebroventricular injection. The polypeptide is U1-theraphotoxin-Hs1f (Cyriopagopus schmidti (Chinese bird spider)).